We begin with the raw amino-acid sequence, 209 residues long: MGKVHVFDHPLIQHKMSYIRDANTGTKEFRELVDEVGMLMAYEVTRDLELQDVEIETPVTKTTAKRLSGKKLAFVPILRAGLGMTQGILSLIPAARVGHVGLYRDPETLEAVEYFVKLPQDIEEREIVVVDPMLATGASAIEAINSLKNRGAKNIRFMCLIAALEGVEKLQEAHPDVDIFIAALDEKLNDKAYITPGLGDAGDRLFGTK.

5-phospho-alpha-D-ribose 1-diphosphate contacts are provided by residues R79, R104, and 131-139; that span reads DPMLATGAS. Uracil is bound by residues I194 and 199-201; that span reads GDA. Position 200 (D200) interacts with 5-phospho-alpha-D-ribose 1-diphosphate.

The protein belongs to the UPRTase family. It depends on Mg(2+) as a cofactor.

It carries out the reaction UMP + diphosphate = 5-phospho-alpha-D-ribose 1-diphosphate + uracil. Its pathway is pyrimidine metabolism; UMP biosynthesis via salvage pathway; UMP from uracil: step 1/1. Allosterically activated by GTP. In terms of biological role, catalyzes the conversion of uracil and 5-phospho-alpha-D-ribose 1-diphosphate (PRPP) to UMP and diphosphate. This is Uracil phosphoribosyltransferase from Staphylococcus carnosus (strain TM300).